Reading from the N-terminus, the 134-residue chain is uncharacterized protein (134 aa).

A run of 3 helical transmembrane segments spans residues 5–25 (FGIF…FGGF), 30–50 (LILL…ETII), and 62–82 (LVKK…DQLL).

Belongs to the bacteriophage holin family. Cp-1 holin subfamily.

The protein localises to the cell membrane. This is an uncharacterized protein from Bacillus subtilis (strain 168).